The sequence spans 295 residues: 33 kDa chaperonin (295 aa).

2 disulfide bridges follow: Cys-237-Cys-239 and Cys-270-Cys-273.

It belongs to the HSP33 family. Under oxidizing conditions two disulfide bonds are formed involving the reactive cysteines. Under reducing conditions zinc is bound to the reactive cysteines and the protein is inactive.

It is found in the cytoplasm. Its function is as follows. Redox regulated molecular chaperone. Protects both thermally unfolding and oxidatively damaged proteins from irreversible aggregation. Plays an important role in the bacterial defense system toward oxidative stress. The sequence is that of 33 kDa chaperonin from Symbiobacterium thermophilum (strain DSM 24528 / JCM 14929 / IAM 14863 / T).